The chain runs to 117 residues: Alpha-endosulfine (117 aa).

The interval 1–53 (MAAPLGTGARAEDSGQEKQDSQEKETVIPERAEEAKLKAKYPNLGQKPGGSDF) is disordered. Residues 10–37 (RAEDSGQEKQDSQEKETVIPERAEEAKL) are compositionally biased toward basic and acidic residues. At Ser-67 the chain carries Phosphoserine; by GWL. Residues 76 to 117 (KMKNKQLPTAGPDKNLVTGDHIPKPQDLPQRKSSLVASKLAG) form a disordered region.

Belongs to the endosulfine family. Post-translationally, phosphorylation at Ser-67 by GWL during mitosis is essential for interaction with PPP2R2D (PR55-delta) and subsequent inactivation of PP2A.

It localises to the cytoplasm. Protein phosphatase inhibitor that specifically inhibits protein phosphatase 2A (PP2A) during mitosis. When phosphorylated at Ser-67 during mitosis, specifically interacts with PPP2R2D (PR55-delta) and inhibits its activity, leading to inactivation of PP2A, an essential condition to keep cyclin-B1-CDK1 activity high during M phase. The protein is Alpha-endosulfine (ENSA) of Gallus gallus (Chicken).